Reading from the N-terminus, the 2631-residue chain is Cyclic GMP-binding protein C (2631 aa).

6 LRR repeats span residues 170 to 194 (TAQI…IFSL), 196 to 217 (WIQK…IGKL), 218 to 240 (QQLQ…IGDL), 242 to 262 (NLKR…LERL), 263 to 285 (SKLE…IASL), and 287 to 308 (SLKT…VVSK). Residues 323 to 515 (GARPCLRSKL…QLIEDIIKTQ (193 aa)) enclose the Roc domain. Residues 336 to 343 (GDPGVGKT), 402 to 406 (DIANQ), and 458 to 461 (THID) contribute to the GTP site. The region spanning 523-741 (PSSFFTLEEA…ESCQKRAVIL (219 aa)) is the COR domain. One can recognise a Protein kinase domain in the interval 878-1172 (VKINKEVGRG…KKKFAPLPFT (295 aa)). Residues 884-892 (VGRGAFGIV) and K905 contribute to the ATP site. D1023 serves as the catalytic Proton acceptor. A compositionally biased stretch (polar residues) spans 1225 to 1250 (ISLTSSGTSPTNSPVGGLLSQSLTQP). Disordered regions lie at residues 1225–1263 (ISLT…ILST) and 1387–1418 (SSAT…RNSV). Low complexity predominate over residues 1251–1263 (ITSGGSTSGILST). The N-terminal Ras-GEF domain occupies 1366–1539 (SVSIIIAATM…QIYGTLTTHE (174 aa)). A compositionally biased stretch (basic and acidic residues) spans 1392-1404 (KSEHISTRRRSDT). One can recognise a DEP domain in the interval 1620 to 1706 (PLLGITVKEK…SPTSFYMFLE (87 aa)). The Ras-GEF domain maps to 1708–1971 (DPELIARQYT…DLKALDSLQI (264 aa)). The interval 1989–2013 (GTTNDDKEKGDENGGGLTSSNFFGN) is disordered. Position 2014-2133 (2014-2133 (GSDELTERDW…AKFYKIMANQ (120 aa))) interacts with a nucleoside 3',5'-cyclic phosphate. Disordered stretches follow at residues 2142-2180 (PWSK…GGGL), 2192-2239 (MSLS…TTTD), and 2263-2346 (SANL…GQQP). Low complexity predominate over residues 2144-2174 (SKPKNTTGGSSSSNQSAGPDNILGTTPTGIS). Over residues 2212-2221 (LPSPPAPLQS) the composition is skewed to pro residues. The span at 2222–2238 (PPTSGISSPTTTTSTTT) shows a compositional bias: low complexity. The segment covering 2287–2299 (TINKDPHQRDSGS) has biased composition (basic and acidic residues). The segment covering 2321–2336 (GSISYLGRTQTSTSPL) has biased composition (polar residues). The GRAM domain occupies 2354-2414 (EFCQRFALVD…KNIDKLICIN (61 aa)). Residue 2490–2616 (GDELTKEDWE…ASKWFKYLAT (127 aa)) participates in a nucleoside 3',5'-cyclic phosphate binding.

The protein belongs to the protein kinase superfamily. TKL Ser/Thr protein kinase family. ROCO subfamily.

The enzyme catalyses L-seryl-[protein] + ATP = O-phospho-L-seryl-[protein] + ADP + H(+). It carries out the reaction L-threonyl-[protein] + ATP = O-phospho-L-threonyl-[protein] + ADP + H(+). Its function is as follows. Promotes the exchange of Ras-bound GDP by GTP. Required for cyclic GMP-mediated chemotaxis, polarity. Plays a key role in cyclic AMP-induced myosin II translocation to the cortex. Also involved in the phosphorylation of mlkA and mlcR, either directly or via an intermediate kinase. This Dictyostelium discoideum (Social amoeba) protein is Cyclic GMP-binding protein C (gbpC).